We begin with the raw amino-acid sequence, 302 residues long: Sulfotransferase 1C4 (302 aa).

Residue 55–60 participates in 3'-phosphoadenylyl sulfate binding; the sequence is KAGTTW. Residue 113–115 participates in substrate binding; that stretch reads KTH. His115 (proton acceptor) is an active-site residue. 3'-phosphoadenylyl sulfate-binding positions include Arg137, Ser145, Tyr200, 234–239, and 262–266; these read TSFDVM and FMRKG.

Belongs to the sulfotransferase 1 family. As to expression, expressed at high levels in fetal lung and kidney and at low levels in fetal heart, adult kidney, ovary and spinal cord.

It is found in the cytoplasm. The protein localises to the cytosol. The catalysed reaction is a phenol + 3'-phosphoadenylyl sulfate = an aryl sulfate + adenosine 3',5'-bisphosphate + H(+). It carries out the reaction 17beta-estradiol + 3'-phosphoadenylyl sulfate = 17beta-estradiol 3-sulfate + adenosine 3',5'-bisphosphate + H(+). It catalyses the reaction bisphenol A + 3'-phosphoadenylyl sulfate = bisphenyl A sulfate + adenosine 3',5'-bisphosphate + H(+). In terms of biological role, sulfotransferase that utilizes 3'-phospho-5'-adenylyl sulfate (PAPS) as sulfonate donor to catalyze the sulfate conjugation of phenolic compounds. Can also sulfonate estrogenic compounds, however, the dietary flavonoids (phytoestrogen) and environmental estrogens, like bisphenol A are better substrates than 17beta-estradiol (E2). Mediates the sulfation of doxorubicin and its analog epirubicin, two antitumor anthracyclines. This chain is Sulfotransferase 1C4, found in Homo sapiens (Human).